The sequence spans 30 residues: ASAAGAVREDDDETLLNPVLNSLDNLVSGL.

Leucine 30 is subject to Leucine amide.

It belongs to the frog skin active peptide (FSAP) family. Rothein subfamily. As to expression, expressed by the skin dorsal glands.

The protein resides in the secreted. Its function is as follows. Lacks antimicrobial activity. Does not inhibit the formation of NO by neuronal nitric oxide. The chain is Rothein 3.4 from Litoria rothii (Roth's tree frog).